The following is a 116-amino-acid chain: Vitelline membrane protein Vm32E (116 aa).

The N-terminal stretch at 1-17 (MQIVALTLVAFVAIAGA) is a signal peptide. The VM domain maps to 36–73 (GYPAPPCPTNYLFSCQPNLAPAPCAQEAPAYGSAGAYT).

It belongs to the vitelline membrane family. Post-translationally, sulfated by pip; may be involved in embryo dorsal-ventral axis determination. Sulfation by pip may occur on covalently bound glycosaminoglycans. In terms of tissue distribution, expressed in stage 10 egg-chambers, localized in the outer eggshell (chorion membrane).

It is found in the secreted. Major early eggshell protein. The polypeptide is Vitelline membrane protein Vm32E (Drosophila melanogaster (Fruit fly)).